A 201-amino-acid chain; its full sequence is Probable GTP-binding protein EngB (201 aa).

In terms of domain architecture, EngB-type G spans 22-197; sequence TFPEYAFIGR…LNYIESINKE (176 aa). Residues 30–37, 57–61, 75–78, 142–145, and 175–178 each bind GTP; these read GRSNVGKS, GKTML, DLPG, TKAD, and ITSS. Residues serine 37 and threonine 59 each coordinate Mg(2+).

The protein belongs to the TRAFAC class TrmE-Era-EngA-EngB-Septin-like GTPase superfamily. EngB GTPase family. It depends on Mg(2+) as a cofactor.

Necessary for normal cell division and for the maintenance of normal septation. The polypeptide is Probable GTP-binding protein EngB (Bacteroides fragilis (strain ATCC 25285 / DSM 2151 / CCUG 4856 / JCM 11019 / LMG 10263 / NCTC 9343 / Onslow / VPI 2553 / EN-2)).